The sequence spans 186 residues: Peptidyl-tRNA hydrolase (186 aa).

Position 14 (tyrosine 14) interacts with tRNA. Histidine 19 serves as the catalytic Proton acceptor. Tyrosine 61, asparagine 63, and asparagine 107 together coordinate tRNA.

Belongs to the PTH family. Monomer.

The protein localises to the cytoplasm. It catalyses the reaction an N-acyl-L-alpha-aminoacyl-tRNA + H2O = an N-acyl-L-amino acid + a tRNA + H(+). Its function is as follows. Hydrolyzes ribosome-free peptidyl-tRNAs (with 1 or more amino acids incorporated), which drop off the ribosome during protein synthesis, or as a result of ribosome stalling. In terms of biological role, catalyzes the release of premature peptidyl moieties from peptidyl-tRNA molecules trapped in stalled 50S ribosomal subunits, and thus maintains levels of free tRNAs and 50S ribosomes. The chain is Peptidyl-tRNA hydrolase from Helicobacter pylori (strain G27).